The primary structure comprises 726 residues: A-type inclusion protein A25 homolog (726 aa).

The segment at 342-361 (TNTGIEEPHATGGDKEDQPI) is disordered. Over residues 347–360 (EEPHATGGDKEDQP) the composition is skewed to basic and acidic residues. The 4 X approximate tandem repeats stretch occupies residues 426-713 (TELEEAKRKL…ERQLNDCRRN (288 aa)). Tandem repeats lie at residues 612–634 (RELE…CTRN), 639–661 (QEVD…CIES), 667–689 (TEIS…CRGN), and 691–713 (TEIS…CRRN).

It belongs to the poxviridae A25 protein family. In terms of assembly, interacts (via N-terminus) with protein A26.

Its subcellular location is the virion. Its function is as follows. Structural protein that forms a matrix surrounding the mature virion (MV) through interaction with protein A26. Presence of protein A25 in the virion structurally prevents direct virus-cell fusion mechanism. This Camelus protein is A-type inclusion protein A25 homolog.